The sequence spans 341 residues: Radial spoke head 14 homolog (341 aa).

ARM repeat units follow at residues 16-55 (PTKA…DLMH), 57-96 (PEYV…IMAT), 99-138 (VGRV…LAQL), 139-178 (PKGA…LCLQ), 180-217 (DATE…AISI), 219-258 (LDGK…HATV), 260-300 (TEGK…MLAE), and 302-339 (PEGR…VIEW).

The protein belongs to the flagellar radial spoke RSP14 family. In terms of assembly, component of the axonemal radial spoke complex 1 (RS1), at least composed of spoke head proteins RSPH1, RSPH3, RSPH9 and the cilia-specific component RSPH4A or sperm-specific component RSPH6A, spoke stalk proteins RSPH14, DNAJB13, DYDC1, ROPN1L and NME5, and the anchor protein IQUB.

The protein localises to the cytoplasm. It is found in the cytoskeleton. Its subcellular location is the flagellum axoneme. In terms of biological role, functions as part of axonemal radial spoke complexes that play an important part in the motility of sperm and cilia. This Mus musculus (Mouse) protein is Radial spoke head 14 homolog.